Consider the following 153-residue polypeptide: Endoribonuclease YbeY (153 aa).

3 residues coordinate Zn(2+): histidine 116, histidine 120, and histidine 126.

Belongs to the endoribonuclease YbeY family. Zn(2+) serves as cofactor.

It localises to the cytoplasm. Single strand-specific metallo-endoribonuclease involved in late-stage 70S ribosome quality control and in maturation of the 3' terminus of the 16S rRNA. This chain is Endoribonuclease YbeY, found in Paraburkholderia phymatum (strain DSM 17167 / CIP 108236 / LMG 21445 / STM815) (Burkholderia phymatum).